We begin with the raw amino-acid sequence, 260 residues long: GTP cyclohydrolase FolE2 (260 aa).

It belongs to the GTP cyclohydrolase IV family.

It carries out the reaction GTP + H2O = 7,8-dihydroneopterin 3'-triphosphate + formate + H(+). It participates in cofactor biosynthesis; 7,8-dihydroneopterin triphosphate biosynthesis; 7,8-dihydroneopterin triphosphate from GTP: step 1/1. In terms of biological role, converts GTP to 7,8-dihydroneopterin triphosphate. The chain is GTP cyclohydrolase FolE2 from Desulfovibrio desulfuricans (strain ATCC 27774 / DSM 6949 / MB).